Consider the following 254-residue polypeptide: tRNA 2'-phosphotransferase 1 (254 aa).

Methionine 1 carries the N-acetylmethionine modification. Disordered regions lie at residues 1–30 (MNSFGGRRRETAGPKGRRAHRPPQDQDRDV) and 225–254 (RKPLSLAGNEEKEHQRDSKHSSRGRGMTQQ). Residues 233-244 (NEEKEHQRDSKH) show a composition bias toward basic and acidic residues.

Belongs to the KptA/TPT1 family.

It catalyses the reaction 2'-phospho-[ligated tRNA] + NAD(+) = mature tRNA + ADP-alpha-D-ribose 1'',2''-cyclic phosphate + nicotinamide. Catalyzes the last step of tRNA splicing, the transfer of the splice junction 2'-phosphate from ligated tRNA to NAD to produce ADP-ribose 1''-2'' cyclic phosphate. The sequence is that of tRNA 2'-phosphotransferase 1 (TRPT1) from Bos taurus (Bovine).